A 211-amino-acid chain; its full sequence is Protein-L-isoaspartate O-methyltransferase (211 aa).

Serine 62 is a catalytic residue.

Belongs to the methyltransferase superfamily. L-isoaspartyl/D-aspartyl protein methyltransferase family.

It is found in the cytoplasm. The catalysed reaction is [protein]-L-isoaspartate + S-adenosyl-L-methionine = [protein]-L-isoaspartate alpha-methyl ester + S-adenosyl-L-homocysteine. Functionally, catalyzes the methyl esterification of L-isoaspartyl residues in peptides and proteins that result from spontaneous decomposition of normal L-aspartyl and L-asparaginyl residues. It plays a role in the repair and/or degradation of damaged proteins. In Shewanella sp. (strain MR-4), this protein is Protein-L-isoaspartate O-methyltransferase.